The following is a 111-amino-acid chain: U-scoloptoxin(16)-Sm2a (111 aa).

The signal sequence occupies residues 1–28 (MCAKPNHLFVTVTFIFGFAVCIVQISAW).

Belongs to the scoloptoxin-16 family. Post-translationally, contains 4 disulfide bonds. As to expression, expressed by the venom gland.

It is found in the secreted. In Scolopendra morsitans (Tanzanian blue ringleg centipede), this protein is U-scoloptoxin(16)-Sm2a.